The sequence spans 174 residues: Ubiquitin-fold modifier-conjugating enzyme 1 (174 aa).

Catalysis depends on Cys119, which acts as the Glycyl thioester intermediate.

This sequence belongs to the ubiquitin-conjugating enzyme family. UFC1 subfamily.

E2-like enzyme which forms an intermediate with UFM1 via a thioester linkage. In Arabidopsis thaliana (Mouse-ear cress), this protein is Ubiquitin-fold modifier-conjugating enzyme 1.